Reading from the N-terminus, the 84-residue chain is ATP synthase subunit c (84 aa).

Transmembrane regions (helical) follow at residues 9 to 29 and 54 to 74; these read IIGA…GFAI and IVAG…LLFI.

Belongs to the ATPase C chain family. As to quaternary structure, F-type ATPases have 2 components, F(1) - the catalytic core - and F(0) - the membrane proton channel. F(1) has five subunits: alpha(3), beta(3), gamma(1), delta(1), epsilon(1). F(0) has three main subunits: a(1), b(2) and c(10-14). The alpha and beta chains form an alternating ring which encloses part of the gamma chain. F(1) is attached to F(0) by a central stalk formed by the gamma and epsilon chains, while a peripheral stalk is formed by the delta and b chains.

Its subcellular location is the cell inner membrane. F(1)F(0) ATP synthase produces ATP from ADP in the presence of a proton or sodium gradient. F-type ATPases consist of two structural domains, F(1) containing the extramembraneous catalytic core and F(0) containing the membrane proton channel, linked together by a central stalk and a peripheral stalk. During catalysis, ATP synthesis in the catalytic domain of F(1) is coupled via a rotary mechanism of the central stalk subunits to proton translocation. In terms of biological role, key component of the F(0) channel; it plays a direct role in translocation across the membrane. A homomeric c-ring of between 10-14 subunits forms the central stalk rotor element with the F(1) delta and epsilon subunits. This chain is ATP synthase subunit c, found in Haemophilus ducreyi (strain 35000HP / ATCC 700724).